Here is a 328-residue protein sequence, read N- to C-terminus: Mannitol-1-phosphate 5-dehydrogenase (328 aa).

Residue 3–14 (LIHFGAGNIGCG) participates in NAD(+) binding.

Belongs to the mannitol dehydrogenase family.

The catalysed reaction is D-mannitol 1-phosphate + NAD(+) = beta-D-fructose 6-phosphate + NADH + H(+). In Mycoplasma mycoides subsp. mycoides SC (strain CCUG 32753 / NCTC 10114 / PG1), this protein is Mannitol-1-phosphate 5-dehydrogenase (mtlD).